We begin with the raw amino-acid sequence, 215 residues long: Pyrrolidone-carboxylate peptidase (215 aa).

Residues E78, C141, and H165 contribute to the active site.

Belongs to the peptidase C15 family. As to quaternary structure, homotetramer.

It localises to the cytoplasm. The catalysed reaction is Release of an N-terminal pyroglutamyl group from a polypeptide, the second amino acid generally not being Pro.. In terms of biological role, removes 5-oxoproline from various penultimate amino acid residues except L-proline. The chain is Pyrrolidone-carboxylate peptidase from Lacticaseibacillus paracasei (strain ATCC 334 / BCRC 17002 / CCUG 31169 / CIP 107868 / KCTC 3260 / NRRL B-441) (Lactobacillus paracasei).